A 335-amino-acid polypeptide reads, in one-letter code: Dihydroorotate dehydrogenase (quinone) (335 aa).

Residues 59–63 (AGLDK) and Thr-83 each bind FMN. Lys-63 is a substrate binding site. Residue 108–112 (NRMGF) participates in substrate binding. 2 residues coordinate FMN: Asn-136 and Asn-169. Asn-169 serves as a coordination point for substrate. Ser-172 functions as the Nucleophile in the catalytic mechanism. Asn-174 contacts substrate. FMN contacts are provided by Lys-214 and Thr-242. 243-244 (NT) serves as a coordination point for substrate. Residues Gly-265, Gly-294, and 315 to 316 (YS) contribute to the FMN site.

It belongs to the dihydroorotate dehydrogenase family. Type 2 subfamily. Monomer. It depends on FMN as a cofactor.

Its subcellular location is the cell membrane. The catalysed reaction is (S)-dihydroorotate + a quinone = orotate + a quinol. It functions in the pathway pyrimidine metabolism; UMP biosynthesis via de novo pathway; orotate from (S)-dihydroorotate (quinone route): step 1/1. In terms of biological role, catalyzes the conversion of dihydroorotate to orotate with quinone as electron acceptor. The polypeptide is Dihydroorotate dehydrogenase (quinone) (Neisseria meningitidis serogroup B (strain ATCC BAA-335 / MC58)).